The primary structure comprises 206 residues: Putative 3-methyladenine DNA glycosylase (206 aa).

It belongs to the DNA glycosylase MPG family.

This Rhodopseudomonas palustris (strain ATCC BAA-98 / CGA009) protein is Putative 3-methyladenine DNA glycosylase.